The chain runs to 384 residues: Sphingosine kinase 1 (384 aa).

The DAGKc domain maps to 12-159 (PRPCRVLVLL…MNLLSLHTAS (148 aa)). Residues 22-24 (NPR) and 54-58 (TERRN) each bind ATP. 79 to 82 (SGDG) contacts substrate. Catalysis depends on Asp-81, which acts as the Proton donor/acceptor. ATP-binding positions include Glu-86 and 111–113 (GSG). Short sequence motifs (nuclear export signal) lie at residues 147 to 155 (LSPMNLLSL) and 161 to 169 (LRLFSVLSL). Asp-178 is a substrate binding site. Positions 185 and 191 each coordinate ATP. Thr-193 is subject to Phosphothreonine. Ser-225 bears the Phosphoserine mark. Residue 341 to 343 (DGE) coordinates ATP.

In terms of assembly, interacts with ACY1. Binds to calmodulin. Interacts with SPHKAP. Interacts with CIB1, the interaction occurs in a calcium-dependent manner. Interacts with TRAF2. Interacts with EEF1A1; the interaction enhances SPHK1 kinase activity. Mg(2+) is required as a cofactor. Widely expressed with highest levels in adult liver, kidney, heart and skeletal muscle. Expressed in brain cortex (at protein level).

Its subcellular location is the cytoplasm. The protein resides in the nucleus. The protein localises to the cell membrane. It localises to the endosome membrane. It is found in the membrane. Its subcellular location is the clathrin-coated pit. The protein resides in the synapse. The enzyme catalyses a sphingoid base + ATP = a sphingoid 1-phosphate + ADP + H(+). The catalysed reaction is L-seryl-[protein] + acetyl-CoA = O-acetyl-L-seryl-[protein] + CoA. It carries out the reaction sphinganine + ATP = sphinganine 1-phosphate + ADP + H(+). It catalyses the reaction sphing-4-enine + ATP = sphing-4-enine 1-phosphate + ADP + H(+). The enzyme catalyses 1-O-hexadecyl-2-amino-sn-glycerol + ATP = 1-O-hexadecyl-2-desoxy-2-amino-sn-glycero-3-phosphate + ADP + H(+). With respect to regulation, acetyltransferase activity increases in presence of the kinase substrate, sphingosine. In Purkinje cells, kinase activity on sphingosine increases in presence of VEGFA. In neurons, kinase activity increases during the first 24h in presence of Amyloid-beta protein 42 to decrease after 96h. Its function is as follows. Catalyzes the phosphorylation of sphingosine to form sphingosine 1-phosphate (SPP), a lipid mediator with both intra- and extracellular functions. Also acts on D-erythro-sphingosine and to a lesser extent sphinganine, but not other lipids, such as D,L-threo-dihydrosphingosine, N,N-dimethylsphingosine, diacylglycerol, ceramide, or phosphatidylinositol. In contrast to proapoptotic SPHK2, has a negative effect on intracellular ceramide levels, enhances cell growth and inhibits apoptosis. Involved in the regulation of inflammatory response and neuroinflammation. Via the product sphingosine 1-phosphate, stimulates TRAF2 E3 ubiquitin ligase activity, and promotes activation of NF-kappa-B in response to TNF signaling leading to IL17 secretion. In response to TNF and in parallel to NF-kappa-B activation, negatively regulates RANTES induction through p38 MAPK signaling pathway. Involved in endocytic membrane trafficking induced by sphingosine, recruited to dilate endosomes, also plays a role on later stages of endosomal maturation and membrane fusion independently of its kinase activity. In Purkinje cells, seems to be also involved in the regulation of autophagosome-lysosome fusion upon VEGFA. In terms of biological role, has serine acetyltransferase activity on PTGS2/COX2 in an acetyl-CoA dependent manner. The acetyltransferase activity increases in presence of the kinase substrate, sphingosine. During neuroinflammation, through PTGS2 acetylation, promotes neuronal secretion of specialized preresolving mediators (SPMs), especially 15-R-lipoxin A4, which results in an increase of phagocytic microglia. In Homo sapiens (Human), this protein is Sphingosine kinase 1.